A 481-amino-acid polypeptide reads, in one-letter code: UDP-glycosyltransferase 88F3 (481 aa).

UDP-alpha-D-glucose-binding positions include Ser-288, 357–358 (WA), 375–383 (HCGWNSVLE), and 397–400 (YAEQ).

It belongs to the UDP-glycosyltransferase family.

Its function is as follows. Glycosyltransferase that may possess chalcone and dihydrochalcone 2'-O-glucosyltransferase activity. The chain is UDP-glycosyltransferase 88F3 from Pyrus communis (Pear).